A 149-amino-acid chain; its full sequence is Transcriptional repressor NrdR (149 aa).

A zinc finger lies at 3-34; sequence CPFCSATDTKVIDSRLVADGHQVRRRRECVQC. The 91-residue stretch at 49–139 folds into the ATP-cone domain; it reads PRVVKQDGSR…VYRAFEDVSE (91 aa).

This sequence belongs to the NrdR family. Zn(2+) serves as cofactor.

Its function is as follows. Negatively regulates transcription of bacterial ribonucleotide reductase nrd genes and operons by binding to NrdR-boxes. This Shewanella piezotolerans (strain WP3 / JCM 13877) protein is Transcriptional repressor NrdR.